Here is a 128-residue protein sequence, read N- to C-terminus: Small ribosomal subunit protein bS6 (128 aa).

The protein belongs to the bacterial ribosomal protein bS6 family.

In terms of biological role, binds together with bS18 to 16S ribosomal RNA. This is Small ribosomal subunit protein bS6 from Geotalea uraniireducens (strain Rf4) (Geobacter uraniireducens).